Here is a 130-residue protein sequence, read N- to C-terminus: MAQAQYAGTGRRKNAVARVRLVPGTGKITVNKKDVEEYIPHADLRLIINQPFAVTSTEGSYDVFVNVVGGGYAGQSGAIRHGIARALLQVDPDFRDSLKRAGLLTRDARMVERKKPGLKKARKASQFSKR.

This sequence belongs to the universal ribosomal protein uS9 family.

This Streptococcus equi subsp. zooepidemicus (strain H70) protein is Small ribosomal subunit protein uS9.